The chain runs to 258 residues: Acidic leucine-rich nuclear phosphoprotein 32 family member E (258 aa).

M1 carries the N-acetylmethionine modification. LRR repeat units lie at residues 18–38 (EVTE…EGLN), 43–64 (ELEF…PSLN), 65–87 (KLRK…AEKC), and 89–110 (NLTY…EALQ). Residue K68 forms a Glycyl lysine isopeptide (Lys-Gly) (interchain with G-Cter in SUMO2) linkage. Positions 123–161 (CEITNLEDYRESIFELLQQITYLDGFDQEDNEAPDSEEE) constitute an LRRCT domain. 2 stretches are compositionally biased toward acidic residues: residues 149-206 (DQED…EEEV) and 216-238 (IQDE…EEEE). A disordered region spans residues 149 to 258 (DQEDNEAPDS…AEDDGEEDDD (110 aa)). The interval 205 to 258 (EVGLSYLMKEEIQDEEDDDDYVDEGEEEEEEEEEGPRGEKRKRDAEDDGEEDDD) is ZID domain. Positions 239–249 (GPRGEKRKRDA) are enriched in basic and acidic residues.

This sequence belongs to the ANP32 family. In terms of assembly, component of a SWR1-like complex, composed of EP400, KAT5/TIP60, TRRAP, BRD8, RUVBL1, RUVBL2, ING3 and ANP32E; the complex does not contain SRCAP. Interacts with H2A.Z/H2AZ1. Interacts with the importin alpha KPNA1 and KPNA2. In terms of processing, phosphorylated. The phosphorylation is nuclear localization signal (NLS)-dependent.

The protein localises to the cytoplasm. The protein resides in the nucleus. Functionally, histone chaperone that specifically mediates the genome-wide removal of histone H2A.Z/H2AZ1 from the nucleosome: removes H2A.Z/H2AZ1 from its normal sites of deposition, especially from enhancer and insulator regions. Not involved in deposition of H2A.Z/H2AZ1 in the nucleosome. May stabilize the evicted H2A.Z/H2AZ1-H2B dimer, thus shifting the equilibrium towards dissociation and the off-chromatin state. Inhibits activity of protein phosphatase 2A (PP2A). Does not inhibit protein phosphatase 1. May play a role in cerebellar development and synaptogenesis. This Rattus norvegicus (Rat) protein is Acidic leucine-rich nuclear phosphoprotein 32 family member E (Anp32e).